Reading from the N-terminus, the 331-residue chain is 6-phosphogluconolactonase (331 aa).

N6-acetyllysine is present on K287.

The protein belongs to the cycloisomerase 2 family.

It catalyses the reaction 6-phospho-D-glucono-1,5-lactone + H2O = 6-phospho-D-gluconate + H(+). Its pathway is carbohydrate degradation; pentose phosphate pathway; D-ribulose 5-phosphate from D-glucose 6-phosphate (oxidative stage): step 2/3. In terms of biological role, catalyzes the hydrolysis of 6-phosphogluconolactone to 6-phosphogluconate. This chain is 6-phosphogluconolactonase, found in Escherichia coli O6:K15:H31 (strain 536 / UPEC).